The sequence spans 514 residues: Maltose/maltodextrin transport system permease protein MalF (514 aa).

The Cytoplasmic segment spans residues 1–16 (MDVIKKKHWWQSDALK). A helical membrane pass occupies residues 17-36 (WSVLGLLGLLVGYLVVLMYA). The Periplasmic segment spans residues 37–39 (QGE). Residues 40–58 (YLFAITTLILSSAGLYIFA) form a helical membrane-spanning segment. The Cytoplasmic portion of the chain corresponds to 59–66 (NRKAYAWR). Residues 67–92 (YVYPGMAGMGLFVLFPLVCTIAIAFT) form a helical membrane-spanning segment. Residues 93–275 (NYSSTNQLTF…RVFTDEGIQK (183 aa)) lie on the Periplasmic side of the membrane. The helical transmembrane segment at 276–306 (PFLAIFVWTVVFSLITVFLTVAVGMVLACLV) threads the bilayer. The ABC transmembrane type-1 domain maps to 281–505 (FVWTVVFSLI…LLVGALAIVN (225 aa)). Over 307–318 (QWEALRGKAVYR) the chain is Cytoplasmic. The chain crosses the membrane as a helical span at residues 319 to 336 (VLLILPYAVPSFISILIF). Residues 337 to 369 (KGLFNQSFGEINMMLSALFGVKPAWFSDPTTAR) lie on the Periplasmic side of the membrane. A helical membrane pass occupies residues 370–392 (TMLIIVNTWLGYPYMMILCMGLL). Over 393-425 (KAIPDDLYEASAMDGAGPFQNFFKITLPLLIKP) the chain is Cytoplasmic. A helical membrane pass occupies residues 426 to 452 (LTPLMIASFAFNFNNFVLIQLLTNGGP). Topologically, residues 453-483 (DRLGTTTPAGYTDLLVNYTYRIAFEGGGGQD) are periplasmic. Residues 484-505 (FGLAAAIATLIFLLVGALAIVN) form a helical membrane-spanning segment. Residues 506–514 (LKATRMKFD) lie on the Cytoplasmic side of the membrane.

The protein belongs to the binding-protein-dependent transport system permease family. MalFG subfamily. In terms of assembly, the complex is composed of two ATP-binding proteins (MalK), two transmembrane proteins (MalG and MalF) and a solute-binding protein (MalE). Protein stability and stable complex formation require YidC.

Its subcellular location is the cell inner membrane. Its function is as follows. Part of the ABC transporter complex MalEFGK involved in maltose/maltodextrin import. Probably responsible for the translocation of the substrate across the membrane. The chain is Maltose/maltodextrin transport system permease protein MalF from Escherichia coli (strain K12).